The primary structure comprises 235 residues: Transmembrane emp24 domain-containing protein 9 (235 aa).

A signal peptide spans 1 to 37; the sequence is MAAVRGVRVVGTSPGLLLGRGMRAFLLLLCLAARGGA. Over 38–202 the chain is Lumenal; the sequence is LYFHIGETEK…RQTSESTNQR (165 aa). A GOLD domain is found at 47–145; sequence KKCFIEEIPD…MLRVHLDIQV (99 aa). Residues 121 to 160 form a required for interaction with STX17 region; that stretch reads CLHSNSTKFSLFAGGMLRVHLDIQVGEHANDYAEIAAKDK. Residue asparagine 125 is glycosylated (N-linked (GlcNAc...) asparagine). The stretch at 154–184 forms a coiled coil; sequence EIAAKDKLSELQLRVRQLVEQVEQIQKEQNY. At lysine 160 the chain carries N6-acetyllysine. The chain crosses the membrane as a helical span at residues 203 to 222; sequence VLWWSILQTLILVAIGVWQM. Over 223-235 the chain is Cytoplasmic; the sequence is RHLKSFFEAKKLV. Residues 228-229 carry the COPII vesicle coat-binding motif; the sequence is FF. The COPI vesicle coat-binding signature appears at 228-235; it reads FFEAKKLV.

The protein belongs to the EMP24/GP25L family. Monomer and homodimer in endoplasmic reticulum. Predominantly monomeric and to lesser extent homodimeric in endoplasmic reticulum-Golgi intermediate compartment and cis-Golgi network. Probably oligomerizes with other members of the EMP24/GP25L family such as TMED2, TMED7 and TMED10. Interacts with TMED5. Interacts (via C-terminus) with COPG1; the interaction involves dimeric TMED9. Interacts with PTPN2 and SPAST. Interacts with STX17; the interaction is direct. Post-translationally, N-linked glycosylated containing high mannose.

Its subcellular location is the endoplasmic reticulum membrane. It localises to the golgi apparatus. The protein resides in the cis-Golgi network membrane. The protein localises to the endoplasmic reticulum-Golgi intermediate compartment membrane. It is found in the trans-Golgi network membrane. Functionally, appears to be involved in vesicular protein trafficking, mainly in the early secretory pathway. In COPI vesicle-mediated retrograde transport involved in the coatomer recruitment to membranes of the early secretory pathway. Increases coatomer-dependent activity of ARFGAP2. Thought to play a crucial role in the specific retention of p24 complexes in cis-Golgi membranes; specifically contributes to the coupled localization of TMED2 and TMED10 in the cis-Golgi network. May be involved in organization of intracellular membranes, such as of the ER-Golgi intermediate compartment and the Golgi apparatus. Involved in ER localization of PTPN2. This Rattus norvegicus (Rat) protein is Transmembrane emp24 domain-containing protein 9 (Tmed9).